The sequence spans 238 residues: MRLEFSIYRYNPDVDDAPRMQDYTLEADEGRDMMLLDALIQLKEKDPSLSFRRSCREGVCGSDGLNMNGKNGLACITPISALNQPGKKIVIRPLPGLPVIRDLVVDMGQFYAQYEKIKPYLLNNGQNPPAREHLQMPEQREKLDGLYECILCACCSTSCPSFWWNPDKFIGPAGLLAAYRFLIDSRDTETDSRLDGLSDAFSVFRCHSIMNCVSVCPKGLNPTRAIGHIKSMLLQRNA.

The region spanning 8 to 97 (YRYNPDVDDA…KIVIRPLPGL (90 aa)) is the 2Fe-2S ferredoxin-type domain. Residues C55, C60, and C75 each contribute to the [2Fe-2S] cluster site. The 4Fe-4S ferredoxin-type domain occupies 139-169 (QREKLDGLYECILCACCSTSCPSFWWNPDKF). 3 residues coordinate [4Fe-4S] cluster: C149, C152, and C155. C159 lines the [3Fe-4S] cluster pocket. W164 contacts a ubiquinone. [3Fe-4S] cluster is bound by residues C206 and C212. Position 216 (C216) interacts with [4Fe-4S] cluster.

Belongs to the succinate dehydrogenase/fumarate reductase iron-sulfur protein family. In terms of assembly, part of an enzyme complex containing four subunits: a flavoprotein, an iron-sulfur, cytochrome b-556, and a hydrophobic anchor protein. The complex forms trimers. [2Fe-2S] cluster is required as a cofactor. [3Fe-4S] cluster serves as cofactor. It depends on [4Fe-4S] cluster as a cofactor.

The protein localises to the cell inner membrane. The enzyme catalyses a quinone + succinate = fumarate + a quinol. It participates in carbohydrate metabolism; tricarboxylic acid cycle; fumarate from succinate (bacterial route): step 1/1. Its function is as follows. Two distinct, membrane-bound, FAD-containing enzymes are responsible for the catalysis of fumarate and succinate interconversion; the fumarate reductase is used in anaerobic growth, and the succinate dehydrogenase is used in aerobic growth. This Escherichia coli (strain K12) protein is Succinate dehydrogenase iron-sulfur subunit (sdhB).